The primary structure comprises 305 residues: Tyrosine recombinase XerC (305 aa).

In terms of domain architecture, Core-binding (CB) spans 4 to 95 (TSIQELINKW…AVKNFYKFLE (92 aa)). Residues 116-298 (LLPKSLSEDD…SIKHLVSVYT (183 aa)) enclose the Tyr recombinase domain. Active-site residues include R159, K182, H250, R253, and H276. Catalysis depends on Y285, which acts as the O-(3'-phospho-DNA)-tyrosine intermediate.

The protein belongs to the 'phage' integrase family. XerC subfamily. In terms of assembly, forms a cyclic heterotetrameric complex composed of two molecules of XerC and two molecules of XerD.

The protein resides in the cytoplasm. Functionally, site-specific tyrosine recombinase, which acts by catalyzing the cutting and rejoining of the recombining DNA molecules. The XerC-XerD complex is essential to convert dimers of the bacterial chromosome into monomers to permit their segregation at cell division. It also contributes to the segregational stability of plasmids. The sequence is that of Tyrosine recombinase XerC from Rickettsia canadensis (strain McKiel).